Reading from the N-terminus, the 123-residue chain is Signal recognition particle 14 kDa protein (123 aa).

The disordered stretch occupies residues 99–123 (KKKPTPTTTPSSSTTAKTAAKKTKV). Over residues 103 to 116 (TPTTTPSSSTTAKT) the composition is skewed to low complexity.

This sequence belongs to the SRP14 family. In terms of assembly, heterodimer with srp9; binds RNA as heterodimer. Component of a signal recognition particle (SRP) complex that consists of a 7SL RNA molecule and six protein subunits: srp72, srp68, srp54, srp19, srp14 and srp9.

It localises to the cytoplasm. Component of the signal recognition particle (SRP) complex, a ribonucleoprotein complex that mediates the cotranslational targeting of secretory and membrane proteins to the endoplasmic reticulum (ER). Srp9 together with srp14 and the Alu portion of the SRP RNA, constitutes the elongation arrest domain of SRP. The complex of srp9 and srp14 is required for SRP RNA binding. This chain is Signal recognition particle 14 kDa protein (srp14-1), found in Dictyostelium discoideum (Social amoeba).